The chain runs to 101 residues: NAD(P)H-quinone oxidoreductase subunit 4L, chloroplastic (101 aa).

3 consecutive transmembrane segments (helical) span residues 2-22, 32-52, and 61-81; these read MLEH…YGLI, MCLE…SDLF, and VFSI…PAIV.

Belongs to the complex I subunit 4L family. NDH is composed of at least 16 different subunits, 5 of which are encoded in the nucleus.

It localises to the plastid. Its subcellular location is the chloroplast thylakoid membrane. The enzyme catalyses a plastoquinone + NADH + (n+1) H(+)(in) = a plastoquinol + NAD(+) + n H(+)(out). It carries out the reaction a plastoquinone + NADPH + (n+1) H(+)(in) = a plastoquinol + NADP(+) + n H(+)(out). Its function is as follows. NDH shuttles electrons from NAD(P)H:plastoquinone, via FMN and iron-sulfur (Fe-S) centers, to quinones in the photosynthetic chain and possibly in a chloroplast respiratory chain. The immediate electron acceptor for the enzyme in this species is believed to be plastoquinone. Couples the redox reaction to proton translocation, and thus conserves the redox energy in a proton gradient. In Nuphar advena (Common spatterdock), this protein is NAD(P)H-quinone oxidoreductase subunit 4L, chloroplastic.